Reading from the N-terminus, the 878-residue chain is Protein argonaute 6 (878 aa).

Low complexity predominate over residues 1 to 17 (METSSSLPLSPISIEPE). The tract at residues 1–25 (METSSSLPLSPISIEPEQPSHRDYD) is disordered. One can recognise a PAZ domain in the interval 259–372 (PVIEFLKANQ…LPLEFCNLVS (114 aa)). Residues 541-851 (FILCILPERK…AAAQVAQFTK (311 aa)) form the Piwi domain.

It belongs to the argonaute family. Ago subfamily. As to expression, expressed in roots, cotyledons and shoot meristematic region.

It is found in the nucleus. Involved in transcriptional gene silencing (TGS). Component of the RISC complex that associate with the small interfering RNA (siRNA) pathway involved in direct cytosine methylation at endogenous DNA repeats. Required for the accumulation of specific siRNAs derived from transgene and heterochromatin-related endogenous loci. Involved in RNA-directed DNA methylation (RdDM) at specific endogenous loci. Probably not required for the accumulation of siRNAs derived from transgene inverted repeats that induce post-transcriptional gene silencing (PTGS). Associates mainly with small RNAs of 24 nucleotide in length and preferentially recruits small RNAs with a 5' terminal adenosine. Targeted by turnip yellows virus (TuYV) protein P0 (via F-box-like domain) for probable proteasome degradation and thereby inactivating AGO6 function in RNA silencing. The chain is Protein argonaute 6 (AGO6) from Arabidopsis thaliana (Mouse-ear cress).